Here is a 798-residue protein sequence, read N- to C-terminus: Galactinol--sucrose galactosyltransferase (798 aa).

Belongs to the glycosyl hydrolases 36 family.

The enzyme catalyses alpha-D-galactosyl-(1-&gt;3)-1D-myo-inositol + sucrose = raffinose + myo-inositol. With respect to regulation, inhibited by 1-deoxygalactonojirimycin. Not inhibited by stachyose. Strong inhibition of the hydrolytic activity by sucrose. Functionally, transglycosidase operating by a ping-pong reaction mechanism. Involved in the synthesis of raffinose, a major soluble carbohydrate in seeds, roots and tubers. Able to utilize D-ononitol and D-pinitol as acceptors. May also act as a glycoside hydrolase. This is Galactinol--sucrose galactosyltransferase (RFS) from Pisum sativum (Garden pea).